A 271-amino-acid polypeptide reads, in one-letter code: MTRWARVTTSNSKRPLSATSWEDMKKGSVERADQSLPNRKQCQSSRLPLRNDSPQAKRKKNKKKKEYLNEDVNGFMEYLKQNSQVLHNGQLIAADSQEVREEIAVALKKDSRREGRRLKRQAAKKNAMVCFHCRQPGHGIADCPAVLESQDMGTGICYRCGSTEHEMSKCRANVDPALGEFPFAKCFVCGEMGHLSRSCPDNTKGVYADGGSCKLCGSVEHFKKDCRENQNSDRIITVGRWAKGMSADYEDVLDVPKLQKPKTKVPKVVNF.

The disordered stretch occupies residues 1-67 (MTRWARVTTS…RKKNKKKKEY (67 aa)). Over residues 7-20 (VTTSNSKRPLSATS) the composition is skewed to polar residues. Basic and acidic residues predominate over residues 22 to 33 (EDMKKGSVERAD). Residues 35–46 (SLPNRKQCQSSR) are compositionally biased toward polar residues. The span at 56-65 (AKRKKNKKKK) shows a compositional bias: basic residues. 4 CCHC-type zinc fingers span residues 128–145 (MVCF…DCPA), 155–172 (GICY…KCRA), 184–201 (AKCF…SCPD), and 211–228 (GSCK…DCRE).

In terms of tissue distribution, detected in brain cortex and in testis.

The protein localises to the nucleus. Its subcellular location is the nucleolus. Functionally, may down-regulate transcription mediated by NF-kappa-B and the serum response element. The polypeptide is Zinc finger CCHC domain-containing protein 9 (Zcchc9) (Mus musculus (Mouse)).